Consider the following 552-residue polypeptide: Cilia- and flagella- associated protein 210 (552 aa).

Coiled coils occupy residues 53–143, 186–307, 348–409, and 460–488; these read DEWK…NAKQ, EEQL…KKRL, IARD…VMKA, and TEAL…TTNK. Residues 216 to 238 form a disordered region; sequence KDHLKQIKEHEEEEERRKKYEEK.

Microtubule inner protein component of sperm flagellar doublet microtubules. Expressed in airway epithelial cells.

It is found in the cytoplasm. Its subcellular location is the cytoskeleton. The protein resides in the cilium axoneme. It localises to the flagellum axoneme. Functionally, microtubule inner protein (MIP) part of the dynein-decorated doublet microtubules (DMTs) in cilia axoneme, which is required for motile cilia beating. The polypeptide is Cilia- and flagella- associated protein 210 (Homo sapiens (Human)).